The following is a 563-amino-acid chain: BOS complex subunit NCLN (563 aa).

An N-terminal signal peptide occupies residues 1-42; sequence MLEEAGEVLENMLKASCLPLGFIVFLPAVLLLVAPPLPAADA. Residues 43-522 are Lumenal-facing; that stretch reads AHEFTVYRMQ…VMNAYRVKPA (480 aa). N-linked (GlcNAc...) asparagine glycosylation is found at N241 and N428. Residues 523–543 form a helical membrane-spanning segment; that stretch reads IFDLLLAVCIGAYLGMAYTAV. Over 544-563 the chain is Cytoplasmic; it reads QHFDLLYKTVQRLLVKAKTQ.

This sequence belongs to the nicastrin family. As to quaternary structure, component of the back of Sec61 (BOS) complex, composed of NCLN/Nicalin, NOMO1 and TMEM147. The BOS complex is part of the multi-pass translocon (MPT) complex, composed of three subcomplexes, the GEL complex (composed of RAB5IF/OPTI and TMCO1), the BOS complex (composed of NCLN/Nicalin, NOMO1 and TMEM147) and the PAT complex (composed of WDR83OS/Asterix and CCDC47). The MPT complex associates with the SEC61 complex.

It is found in the endoplasmic reticulum membrane. Its function is as follows. Component of the multi-pass translocon (MPT) complex that mediates insertion of multi-pass membrane proteins into the lipid bilayer of membranes. The MPT complex takes over after the SEC61 complex: following membrane insertion of the first few transmembrane segments of proteins by the SEC61 complex, the MPT complex occludes the lateral gate of the SEC61 complex to promote insertion of subsequent transmembrane regions. May antagonize Nodal signaling and subsequent organization of axial structures during mesodermal patterning, via its interaction with NOMO. The sequence is that of BOS complex subunit NCLN from Canis lupus familiaris (Dog).